The primary structure comprises 276 residues: Glutamate racemase (276 aa).

Residues 10-11 (DS) and 42-43 (YG) each bind substrate. Residue Cys74 is the Proton donor/acceptor of the active site. 75–76 (NT) lines the substrate pocket. Cys185 functions as the Proton donor/acceptor in the catalytic mechanism. 186–187 (TH) is a substrate binding site.

Belongs to the aspartate/glutamate racemases family.

The catalysed reaction is L-glutamate = D-glutamate. Its pathway is cell wall biogenesis; peptidoglycan biosynthesis. Its function is as follows. Provides the (R)-glutamate required for cell wall biosynthesis. The chain is Glutamate racemase from Levilactobacillus brevis (Lactobacillus brevis).